The following is a 732-amino-acid chain: Exonuclease 1 (732 aa).

The interval 1 to 99 (MGITGLIPFV…KRRRDSRKQS (99 aa)) is N-domain. Positions 30, 78, 150, 152, 171, 173, and 226 each coordinate Mg(2+). The interval 138–230 (RSRNVDCIVA…ILSGCDYLDS (93 aa)) is I-domain. 3 disordered regions span residues 422-471 (YSFK…QRSP), 524-625 (DEQT…TNST), and 661-716 (SCSS…VSQN). A phosphoserine mark is found at Ser431 and Ser433. A compositionally biased stretch (basic and acidic residues) spans 432–442 (PSREDSVDQER). Thr443 bears the Phosphothreonine mark. Ser447 bears the Phosphoserine mark. Basic and acidic residues-rich tracts occupy residues 457-467 (FAKERTGEEAN) and 525-537 (EQTRLQREHLRDT). Polar residues-rich tracts occupy residues 572 to 593 (RCSSQISDGETDTDTTASSLLE) and 608 to 625 (DLNNSQPQIPTEGNTNST). Positions 661–677 (SCSSDQRASSTSSSSQQ) are enriched in low complexity. The span at 703-716 (KSRTNGKLGAVSQN) shows a compositional bias: polar residues.

The protein belongs to the XPG/RAD2 endonuclease family. EXO1 subfamily. The cofactor is Mg(2+). As to expression, specifically expressed in the female germline.

The protein resides in the nucleus. Its function is as follows. 5'-&gt;3' double-stranded DNA exonuclease which may also contain a cryptic 3'-&gt;5' double-stranded DNA exonuclease activity. Also exhibits endonuclease activity against 5'-overhanging flap structures similar to those generated by displacement synthesis when DNA polymerase encounters the 5'-end of a downstream Okazaki fragment. Required for DNA mismatch repair (MMR). This chain is Exonuclease 1 (tos), found in Drosophila melanogaster (Fruit fly).